Reading from the N-terminus, the 331-residue chain is Ketol-acid reductoisomerase (NADP(+)) (331 aa).

The KARI N-terminal Rossmann domain occupies 2–181 (TKVYYEDAVK…GATRAGVIET (180 aa)). Residues 25–28 (YGSQ), Arg48, Ser52, and 82–85 (DETQ) each bind NADP(+). The active site involves His107. Gly133 contacts NADP(+). Residues 182 to 327 (TFKEETETDL…AELREMMPFV (146 aa)) form the KARI C-terminal knotted domain. Positions 190, 194, 226, and 230 each coordinate Mg(2+). Ser251 contributes to the substrate binding site.

It belongs to the ketol-acid reductoisomerase family. Mg(2+) is required as a cofactor.

The enzyme catalyses (2R)-2,3-dihydroxy-3-methylbutanoate + NADP(+) = (2S)-2-acetolactate + NADPH + H(+). The catalysed reaction is (2R,3R)-2,3-dihydroxy-3-methylpentanoate + NADP(+) = (S)-2-ethyl-2-hydroxy-3-oxobutanoate + NADPH + H(+). Its pathway is amino-acid biosynthesis; L-isoleucine biosynthesis; L-isoleucine from 2-oxobutanoate: step 2/4. It functions in the pathway amino-acid biosynthesis; L-valine biosynthesis; L-valine from pyruvate: step 2/4. Involved in the biosynthesis of branched-chain amino acids (BCAA). Catalyzes an alkyl-migration followed by a ketol-acid reduction of (S)-2-acetolactate (S2AL) to yield (R)-2,3-dihydroxy-isovalerate. In the isomerase reaction, S2AL is rearranged via a Mg-dependent methyl migration to produce 3-hydroxy-3-methyl-2-ketobutyrate (HMKB). In the reductase reaction, this 2-ketoacid undergoes a metal-dependent reduction by NADPH to yield (R)-2,3-dihydroxy-isovalerate. The sequence is that of Ketol-acid reductoisomerase (NADP(+)) from Listeria innocua serovar 6a (strain ATCC BAA-680 / CLIP 11262).